We begin with the raw amino-acid sequence, 329 residues long: Large ribosomal subunit protein uL3 (329 aa).

It belongs to the universal ribosomal protein uL3 family. Part of the 50S ribosomal subunit. Forms a cluster with proteins L14 and L24e.

One of the primary rRNA binding proteins, it binds directly near the 3'-end of the 23S rRNA, where it nucleates assembly of the 50S subunit. This chain is Large ribosomal subunit protein uL3, found in Picrophilus torridus (strain ATCC 700027 / DSM 9790 / JCM 10055 / NBRC 100828 / KAW 2/3).